Consider the following 725-residue polypeptide: Fatty acid oxidation complex subunit alpha (725 aa).

Positions 1–189 are enoyl-CoA hydratase/isomerase; the sequence is MLYKGDTLYL…KIGLVDGVVK (189 aa). Asp-296 contributes to the substrate binding site. Positions 311–725 are 3-hydroxyacyl-CoA dehydrogenase; that stretch reads ETPKQAAVLG…RLNQPVRLVL (415 aa). NAD(+) contacts are provided by residues Met-324, Asp-343, 400-402, Lys-407, and Ser-429; that span reads VVE. His-450 functions as the For 3-hydroxyacyl-CoA dehydrogenase activity in the catalytic mechanism. Position 453 (Asn-453) interacts with NAD(+). Substrate contacts are provided by Asn-500 and Tyr-660.

The protein in the N-terminal section; belongs to the enoyl-CoA hydratase/isomerase family. It in the C-terminal section; belongs to the 3-hydroxyacyl-CoA dehydrogenase family. In terms of assembly, heterotetramer of two alpha chains (FadB) and two beta chains (FadA).

The enzyme catalyses a (3S)-3-hydroxyacyl-CoA + NAD(+) = a 3-oxoacyl-CoA + NADH + H(+). It carries out the reaction a (3S)-3-hydroxyacyl-CoA = a (2E)-enoyl-CoA + H2O. It catalyses the reaction a 4-saturated-(3S)-3-hydroxyacyl-CoA = a (3E)-enoyl-CoA + H2O. The catalysed reaction is (3S)-3-hydroxybutanoyl-CoA = (3R)-3-hydroxybutanoyl-CoA. The enzyme catalyses a (3Z)-enoyl-CoA = a 4-saturated (2E)-enoyl-CoA. It carries out the reaction a (3E)-enoyl-CoA = a 4-saturated (2E)-enoyl-CoA. It functions in the pathway lipid metabolism; fatty acid beta-oxidation. Functionally, involved in the aerobic and anaerobic degradation of long-chain fatty acids via beta-oxidation cycle. Catalyzes the formation of 3-oxoacyl-CoA from enoyl-CoA via L-3-hydroxyacyl-CoA. It can also use D-3-hydroxyacyl-CoA and cis-3-enoyl-CoA as substrate. In Salmonella paratyphi A (strain ATCC 9150 / SARB42), this protein is Fatty acid oxidation complex subunit alpha.